A 151-amino-acid chain; its full sequence is Ribonuclease H (151 aa).

Residues 2-143 form the RNase H type-1 domain; the sequence is SSNVIEIYAD…ADALANKGVD (142 aa). The Mg(2+) site is built by D11, E49, D71, and D135.

Belongs to the RNase H family. As to quaternary structure, monomer. The cofactor is Mg(2+).

It localises to the cytoplasm. It carries out the reaction Endonucleolytic cleavage to 5'-phosphomonoester.. Endonuclease that specifically degrades the RNA of RNA-DNA hybrids. This Methylobacillus flagellatus (strain ATCC 51484 / DSM 6875 / VKM B-1610 / KT) protein is Ribonuclease H.